Here is a 154-residue protein sequence, read N- to C-terminus: 6,7-dimethyl-8-ribityllumazine synthase (154 aa).

5-amino-6-(D-ribitylamino)uracil-binding positions include Phe22, 56-58 (AFE), and 80-82 (AVI). 85 to 86 (AT) lines the (2S)-2-hydroxy-3-oxobutyl phosphate pocket. His88 serves as the catalytic Proton donor. 5-amino-6-(D-ribitylamino)uracil is bound at residue Phe113. Residue Arg127 coordinates (2S)-2-hydroxy-3-oxobutyl phosphate.

The protein belongs to the DMRL synthase family.

It carries out the reaction (2S)-2-hydroxy-3-oxobutyl phosphate + 5-amino-6-(D-ribitylamino)uracil = 6,7-dimethyl-8-(1-D-ribityl)lumazine + phosphate + 2 H2O + H(+). It functions in the pathway cofactor biosynthesis; riboflavin biosynthesis; riboflavin from 2-hydroxy-3-oxobutyl phosphate and 5-amino-6-(D-ribitylamino)uracil: step 1/2. Catalyzes the formation of 6,7-dimethyl-8-ribityllumazine by condensation of 5-amino-6-(D-ribitylamino)uracil with 3,4-dihydroxy-2-butanone 4-phosphate. This is the penultimate step in the biosynthesis of riboflavin. In Agathobacter rectalis (strain ATCC 33656 / DSM 3377 / JCM 17463 / KCTC 5835 / VPI 0990) (Eubacterium rectale), this protein is 6,7-dimethyl-8-ribityllumazine synthase.